The chain runs to 316 residues: Homoserine kinase (316 aa).

An ATP-binding site is contributed by 97-107; that stretch reads PPARGLGSSAS.

Belongs to the GHMP kinase family. Homoserine kinase subfamily.

The protein localises to the cytoplasm. It carries out the reaction L-homoserine + ATP = O-phospho-L-homoserine + ADP + H(+). The protein operates within amino-acid biosynthesis; L-threonine biosynthesis; L-threonine from L-aspartate: step 4/5. Its function is as follows. Catalyzes the ATP-dependent phosphorylation of L-homoserine to L-homoserine phosphate. This Prochlorococcus marinus (strain MIT 9313) protein is Homoserine kinase.